The primary structure comprises 531 residues: T-complex protein 1 subunit zeta (531 aa).

Ala-2 bears the N-acetylalanine mark. Lys-5 carries the N6-acetyllysine modification. An ADP-binding site is contributed by Gly-39. Gly-39 serves as a coordination point for ATP. A Mg(2+)-binding site is contributed by Asp-90. ADP is bound by residues Gly-91, Thr-92, Thr-93, Ser-94, Thr-158, and Lys-159. Gly-91, Thr-92, and Thr-93 together coordinate ATP. Lys-199 is subject to N6-acetyllysine. At Ser-205 the chain carries Phosphoserine. Residue Lys-251 forms a Glycyl lysine isopeptide (Lys-Gly) (interchain with G-Cter in SUMO2) linkage. Residues Lys-287, Lys-365, Lys-377, and Lys-388 each carry the N6-acetyllysine modification. Ala-411 lines the ADP pocket. Residues Ala-411, Gly-412, Asp-496, and Lys-501 each coordinate ATP. Asp-496 lines the ADP pocket.

The protein belongs to the TCP-1 chaperonin family. In terms of assembly, component of the chaperonin-containing T-complex (TRiC), a hexadecamer composed of two identical back-to-back stacked rings enclosing a protein folding chamber. Each ring is made up of eight different subunits: TCP1/CCT1, CCT2, CCT3, CCT4, CCT5, CCT6A/CCT6, CCT7, CCT8. Interacts with PACRG.

It is found in the cytoplasm. The enzyme catalyses ATP + H2O = ADP + phosphate + H(+). Component of the chaperonin-containing T-complex (TRiC), a molecular chaperone complex that assists the folding of actin, tubulin and other proteins upon ATP hydrolysis. The TRiC complex mediates the folding of WRAP53/TCAB1, thereby regulating telomere maintenance. This Pongo abelii (Sumatran orangutan) protein is T-complex protein 1 subunit zeta (CCT6).